Consider the following 234-residue polypeptide: Ribose-5-phosphate isomerase A (234 aa).

Substrate is bound by residues 35 to 38 (SGTT), 91 to 94 (DGAD), and 105 to 108 (KGGG). The active-site Proton acceptor is Glu114. Lys132 is a substrate binding site.

The protein belongs to the ribose 5-phosphate isomerase family. In terms of assembly, homodimer.

The enzyme catalyses aldehydo-D-ribose 5-phosphate = D-ribulose 5-phosphate. It participates in carbohydrate degradation; pentose phosphate pathway; D-ribose 5-phosphate from D-ribulose 5-phosphate (non-oxidative stage): step 1/1. In terms of biological role, catalyzes the reversible conversion of ribose-5-phosphate to ribulose 5-phosphate. The sequence is that of Ribose-5-phosphate isomerase A from Methanococcus aeolicus (strain ATCC BAA-1280 / DSM 17508 / OCM 812 / Nankai-3).